Consider the following 410-residue polypeptide: Probable intron-encoded endonuclease bI1 (410 aa).

The interval 1–131 (MRLLKTHPIL…VLMMAIAFLG (131 aa)) is COB exon 1 encoded. A run of 3 helical transmembrane segments spans residues 32–52 (FGSLLGVCLIIQILTGVFLAM), 75–95 (GWLIRYLHANTASFFFIFVYL), and 112–132 (LLWSIGVIILVLMMAIAFLGF). The segment at 132–410 (FNGQKYMCFY…KKNYIVKVIK (279 aa)) is COB intron 1 encoded. The 91-residue stretch at 196-286 (PFSGIYMIVN…LETLKPEYNI (91 aa)) folds into the GIY-YIG domain.

To endonucleases of group I introns of fungi and phage. The mature protein may arise from proteolytic cleavage of an in-frame translation of COB exon 1 plus intron 1, containing the bI1 open reading frame.

Its subcellular location is the mitochondrion. It is found in the membrane. In terms of biological role, mitochondrial DNA endonuclease involved in intron homing. In Mycosarcoma maydis (Corn smut fungus), this protein is Probable intron-encoded endonuclease bI1 (bI1).